The chain runs to 453 residues: Ferruginol synthase (453 aa).

A helical membrane pass occupies residues 15–35; the sequence is LSKKYGPLMSIHLGSLYTVIV. Residue Cys-397 coordinates heme.

This sequence belongs to the cytochrome P450 family. Heme is required as a cofactor. In terms of tissue distribution, expressed in leaf glandular trichomes.

Its subcellular location is the membrane. The catalysed reaction is abieta-8,11,13-triene + reduced [NADPH--hemoprotein reductase] + O2 = ferruginol + oxidized [NADPH--hemoprotein reductase] + H2O + H(+). It carries out the reaction ferruginol + reduced [NADPH--hemoprotein reductase] + O2 = 11-hydroxyferruginol + oxidized [NADPH--hemoprotein reductase] + H2O + H(+). The enzyme catalyses miltiradiene + 2 reduced [NADPH--hemoprotein reductase] + 2 O2 = 11-oxomiltiradiene + 2 oxidized [NADPH--hemoprotein reductase] + 3 H2O + 2 H(+). It participates in secondary metabolite biosynthesis; terpenoid biosynthesis. Its function is as follows. Monooxygenase involved in the biosynthesis of labdane-related diterpenes natural products. Catalyzes the oxidation of abietatriene to produce ferruginol. Ferruginol is an intermediate in the biosynthesis of carnosate, a potent antioxidant. May also convert miltiradiene into 11-oxomiltiradiene. The protein is Ferruginol synthase of Salvia pomifera (Apple sage).